A 138-amino-acid polypeptide reads, in one-letter code: MAELQQLRVQEAVESMVKSLERENIRKMQGLMFRCSASCCEDSQASMKQVHQCIERCHVPLAQAQALVTSELEKFQDRLARCTMHCNDKAKDSIDAGSKELQVKQQLDSCVTKCVDDHMHLIPTMTKKMKEALLSIGK.

Residue A2 is modified to N-acetylalanine. T124 and T126 each carry phosphothreonine.

It belongs to the FAM136 family.

The polypeptide is Protein FAM136A (FAM136A) (Homo sapiens (Human)).